A 1015-amino-acid chain; its full sequence is Frequency clock protein (1015 aa).

8 disordered regions span residues 1-138, 183-285, 352-383, 402-465, 544-614, 629-668, 706-728, and 895-1015; these read MQPT…SADD, KRKK…QKVD, DFSP…TFSS, HVAG…DPDR, GRKI…VSAS, SPNE…NRRK, ERPD…GSSI, and SEDD…SSQG. Residues 49–68 show a composition bias toward low complexity; it reads SAPPNDSNENSSSPRRASSG. Over residues 69–80 the composition is skewed to basic and acidic residues; it reads ESHETGQSDAKK. Residues 82-95 show a composition bias toward polar residues; sequence FNQSNQNPTATFDS. Positions 107–117 are enriched in basic and acidic residues; sequence KESDSSNEDKP. 3 stretches are compositionally biased toward low complexity: residues 203–216, 228–267, and 356–368; these read SPNT…STTK, SGSG…SGTS, and QQQQ…QQQQ. Polar residues predominate over residues 369–383; it reads PKSNFITNPGATFSS. Residues 431-442 show a composition bias toward low complexity; it reads NSSSNGNDSGTN. Pro residues predominate over residues 443 to 453; sequence PSPPMPPPPEQ. Residues 454–465 are compositionally biased toward basic and acidic residues; sequence RPTRPRDLDPDR. A compositionally biased stretch (polar residues) spans 556–570; that stretch reads TKFSSESSGDLSQRS. The Nuclear localization signal signature appears at 584 to 588; sequence HKRQK. The segment covering 590–600 has biased composition (low complexity); sequence GHSTGDSGSSG. Residues 629–643 show a composition bias toward polar residues; that stretch reads SPNEQSSMEDGTLSS. Composition is skewed to acidic residues over residues 895–909 and 934–946; these read SEDD…EFNS and SGDE…EDDI. Over residues 976-1003 the composition is skewed to low complexity; it reads GSSRGRSNSASAEAVLRAGGSSAATAGG.

It belongs to the FRQ family.

It localises to the nucleus. In terms of biological role, circadian clock component involved in the generation of biological rhythms, in particular in rhythm stability, period length, and temperature compensation. Behaves as a negative element in circadian transcriptional loop. This Trichoderma spinulosum (Hypocrea spinulosa) protein is Frequency clock protein (FRQ).